We begin with the raw amino-acid sequence, 558 residues long: CTP synthase (558 aa).

The interval 1 to 267 (MAKFVFVTGG…CLEMLDVLNL (267 aa)) is amidoligase domain. Serine 13 provides a ligand contact to CTP. UTP is bound at residue serine 13. Residues 14 to 19 (SIGKGI) and aspartate 71 each bind ATP. Positions 71 and 141 each coordinate Mg(2+). CTP-binding positions include 148–150 (DIE), 188–193 (KTKPTQ), and lysine 224. Residues 188–193 (KTKPTQ) and lysine 224 each bind UTP. A Glutamine amidotransferase type-1 domain is found at 292–534 (KVALVGKYVQ…IEAAQLRLPA (243 aa)). Residue glycine 354 coordinates L-glutamine. Cysteine 381 acts as the Nucleophile; for glutamine hydrolysis in catalysis. L-glutamine is bound by residues 382-385 (LGMQ), glutamate 405, and arginine 462. Catalysis depends on residues histidine 507 and glutamate 509. The interval 536–558 (PDEALRRQSQTNISAQEKPSRIG) is disordered. A compositionally biased stretch (polar residues) spans 542–552 (RQSQTNISAQE).

This sequence belongs to the CTP synthase family. In terms of assembly, homotetramer.

It catalyses the reaction UTP + L-glutamine + ATP + H2O = CTP + L-glutamate + ADP + phosphate + 2 H(+). The enzyme catalyses L-glutamine + H2O = L-glutamate + NH4(+). The catalysed reaction is UTP + NH4(+) + ATP = CTP + ADP + phosphate + 2 H(+). The protein operates within pyrimidine metabolism; CTP biosynthesis via de novo pathway; CTP from UDP: step 2/2. Allosterically activated by GTP, when glutamine is the substrate; GTP has no effect on the reaction when ammonia is the substrate. The allosteric effector GTP functions by stabilizing the protein conformation that binds the tetrahedral intermediate(s) formed during glutamine hydrolysis. Inhibited by the product CTP, via allosteric rather than competitive inhibition. Catalyzes the ATP-dependent amination of UTP to CTP with either L-glutamine or ammonia as the source of nitrogen. Regulates intracellular CTP levels through interactions with the four ribonucleotide triphosphates. The sequence is that of CTP synthase from Prochlorococcus marinus (strain MIT 9303).